The following is a 406-amino-acid chain: Bifunctional enzyme IspD/IspF (406 aa).

Positions 1–246 (MLQMPSKQPI…KLSASLLPDV (246 aa)) are 2-C-methyl-D-erythritol 4-phosphate cytidylyltransferase. Residues 247–406 (RTGNGYDVHQ…ATVVYRGVKR (160 aa)) are 2-C-methyl-D-erythritol 2,4-cyclodiphosphate synthase. A divalent metal cation contacts are provided by Asp253 and His255. 4-CDP-2-C-methyl-D-erythritol 2-phosphate is bound by residues 253-255 (DVH) and 279-280 (HS). His287 is an a divalent metal cation binding site. 4-CDP-2-C-methyl-D-erythritol 2-phosphate contacts are provided by residues 301–303 (DIG), 377–380 (TTNE), Phe384, and Arg387.

It in the N-terminal section; belongs to the IspD/TarI cytidylyltransferase family. IspD subfamily. The protein in the C-terminal section; belongs to the IspF family. Requires a divalent metal cation as cofactor.

It catalyses the reaction 2-C-methyl-D-erythritol 4-phosphate + CTP + H(+) = 4-CDP-2-C-methyl-D-erythritol + diphosphate. The enzyme catalyses 4-CDP-2-C-methyl-D-erythritol 2-phosphate = 2-C-methyl-D-erythritol 2,4-cyclic diphosphate + CMP. The protein operates within isoprenoid biosynthesis; isopentenyl diphosphate biosynthesis via DXP pathway; isopentenyl diphosphate from 1-deoxy-D-xylulose 5-phosphate: step 2/6. It functions in the pathway isoprenoid biosynthesis; isopentenyl diphosphate biosynthesis via DXP pathway; isopentenyl diphosphate from 1-deoxy-D-xylulose 5-phosphate: step 4/6. Its function is as follows. Bifunctional enzyme that catalyzes the formation of 4-diphosphocytidyl-2-C-methyl-D-erythritol from CTP and 2-C-methyl-D-erythritol 4-phosphate (MEP) (IspD), and catalyzes the conversion of 4-diphosphocytidyl-2-C-methyl-D-erythritol 2-phosphate (CDP-ME2P) to 2-C-methyl-D-erythritol 2,4-cyclodiphosphate (ME-CPP) with a corresponding release of cytidine 5-monophosphate (CMP) (IspF). In Rhizobium leguminosarum bv. trifolii (strain WSM2304), this protein is Bifunctional enzyme IspD/IspF.